We begin with the raw amino-acid sequence, 455 residues long: Phosphoglucosamine mutase (455 aa).

S104 serves as the catalytic Phosphoserine intermediate. Positions 104, 253, 255, and 257 each coordinate Mg(2+). Residue S104 is modified to Phosphoserine.

The protein belongs to the phosphohexose mutase family. It depends on Mg(2+) as a cofactor. Activated by phosphorylation.

The catalysed reaction is alpha-D-glucosamine 1-phosphate = D-glucosamine 6-phosphate. In terms of biological role, catalyzes the conversion of glucosamine-6-phosphate to glucosamine-1-phosphate. This Psychrobacter cryohalolentis (strain ATCC BAA-1226 / DSM 17306 / VKM B-2378 / K5) protein is Phosphoglucosamine mutase.